Reading from the N-terminus, the 367-residue chain is UDP-N-acetylglucosamine--N-acetylmuramyl-(pentapeptide) pyrophosphoryl-undecaprenol N-acetylglucosamine transferase (367 aa).

UDP-N-acetyl-alpha-D-glucosamine-binding positions include 15–17, N127, R163, S191, I249, and Q294; that span reads TGG.

It belongs to the glycosyltransferase 28 family. MurG subfamily.

It localises to the cell inner membrane. The catalysed reaction is di-trans,octa-cis-undecaprenyl diphospho-N-acetyl-alpha-D-muramoyl-L-alanyl-D-glutamyl-meso-2,6-diaminopimeloyl-D-alanyl-D-alanine + UDP-N-acetyl-alpha-D-glucosamine = di-trans,octa-cis-undecaprenyl diphospho-[N-acetyl-alpha-D-glucosaminyl-(1-&gt;4)]-N-acetyl-alpha-D-muramoyl-L-alanyl-D-glutamyl-meso-2,6-diaminopimeloyl-D-alanyl-D-alanine + UDP + H(+). The protein operates within cell wall biogenesis; peptidoglycan biosynthesis. Cell wall formation. Catalyzes the transfer of a GlcNAc subunit on undecaprenyl-pyrophosphoryl-MurNAc-pentapeptide (lipid intermediate I) to form undecaprenyl-pyrophosphoryl-MurNAc-(pentapeptide)GlcNAc (lipid intermediate II). The polypeptide is UDP-N-acetylglucosamine--N-acetylmuramyl-(pentapeptide) pyrophosphoryl-undecaprenol N-acetylglucosamine transferase (Burkholderia cenocepacia (strain ATCC BAA-245 / DSM 16553 / LMG 16656 / NCTC 13227 / J2315 / CF5610) (Burkholderia cepacia (strain J2315))).